We begin with the raw amino-acid sequence, 242 residues long: Thaumatin-like protein 2 (242 aa).

Positions 1–23 (MMKTLGAVLSLSLTLLSFGGAHA) are cleaved as a signal peptide. 8 disulfide bridges follow: Cys32–Cys241, Cys77–Cys87, Cys92–Cys99, Cys147–Cys230, Cys152–Cys213, Cys160–Cys176, Cys180–Cys189, and Cys190–Cys200.

Belongs to the thaumatin family. Preferentially expressed in the abscission zone of fruit. Also expressed in leaf abscission zone.

It localises to the secreted. Functionally, may be involved in protecting plant tissues from pathogen infection. The chain is Thaumatin-like protein 2 from Prunus persica (Peach).